The sequence spans 312 residues: Pyridoxal 5'-phosphate synthase subunit PDX1 (312 aa).

A D-ribose 5-phosphate-binding site is contributed by Asp-43. Lys-100 serves as the catalytic Schiff-base intermediate with D-ribose 5-phosphate. Gly-172 is a binding site for D-ribose 5-phosphate. Arg-184 provides a ligand contact to D-glyceraldehyde 3-phosphate. D-ribose 5-phosphate contacts are provided by residues Gly-233 and 254-255 (GS).

Belongs to the PdxS/SNZ family.

The enzyme catalyses aldehydo-D-ribose 5-phosphate + D-glyceraldehyde 3-phosphate + L-glutamine = pyridoxal 5'-phosphate + L-glutamate + phosphate + 3 H2O + H(+). It participates in cofactor biosynthesis; pyridoxal 5'-phosphate biosynthesis. Its function is as follows. Catalyzes the formation of pyridoxal 5'-phosphate from ribose 5-phosphate (RBP), glyceraldehyde 3-phosphate (G3P) and ammonia. The ammonia is provided by PDX2. Can also use ribulose 5-phosphate and dihydroxyacetone phosphate as substrates, resulting from enzyme-catalyzed isomerization of RBP and G3P, respectively. Also plays an indirect role in resistance to singlet oxygen-generating photosensitizers. The chain is Pyridoxal 5'-phosphate synthase subunit PDX1 (PDX1) from Phaseolus vulgaris (Kidney bean).